The following is a 287-amino-acid chain: Cyclopropane mycolic acid synthase MmaA2 (287 aa).

S-adenosyl-L-methionine-binding positions include 33-34 (YS), 72-74 (GCG), 94-99 (TLSKNQ), 123-124 (WE), and I136. C269 is an active-site residue.

This sequence belongs to the CFA/CMAS family.

It carries out the reaction a 1-acyl-2-(9Z)-enoyl-sn-glycero-3-phospholipid + S-adenosyl-L-methionine = a 1-acyl-2-(9-cyclopronane)-acyl-sn-glycero-3-phospholipid + S-adenosyl-L-homocysteine + H(+). It participates in lipid metabolism; mycolic acid biosynthesis. Catalyzes the conversion of a double bond to a cis cyclopropane ring at the distal position of an alpha mycolic acid via the transfer of a methylene group from S-adenosyl-L-methionine. MmaA2 also catalyzes the biosynthesis of the cis-cyclopropanated methoxymycolates. Cyclopropanated mycolic acids are key factors participating in cell envelope permeability, host immunomodulation and persistence. This Mycobacterium tuberculosis (strain ATCC 25177 / H37Ra) protein is Cyclopropane mycolic acid synthase MmaA2 (mmaA2).